Here is a 352-residue protein sequence, read N- to C-terminus: [LysW]-L-2-aminoadipate/[LysW]-L-glutamate phosphate reductase (352 aa).

Serine 13–threonine 16 lines the NADP(+) pocket. Cysteine 153 is an active-site residue. Asparagine 319 serves as a coordination point for NADP(+).

Belongs to the NAGSA dehydrogenase family. Type 1 subfamily. LysY sub-subfamily.

It is found in the cytoplasm. The enzyme catalyses [amino-group carrier protein]-C-terminal-N-(1-carboxy-5-oxopentan-1-yl)-L-glutamine + phosphate + NADP(+) = [amino-group carrier protein]-C-terminal-N-(1-carboxy-5-phosphooxy-5-oxopentan-1-yl)-L-glutamine + NADPH + H(+). It carries out the reaction [amino-group carrier protein]-C-terminal-gamma-(L-glutamyl-5-semialdehyde)-L-glutamate + phosphate + NADP(+) = [amino-group carrier protein]-C-terminal-gamma-(5-phospho-L-glutamyl)-L-glutamate + NADPH + H(+). It participates in amino-acid biosynthesis; L-lysine biosynthesis via AAA pathway; L-lysine from L-alpha-aminoadipate (Thermus route): step 3/5. It functions in the pathway amino-acid biosynthesis; L-arginine biosynthesis. Involved in both the arginine and lysine biosynthetic pathways. The protein is [LysW]-L-2-aminoadipate/[LysW]-L-glutamate phosphate reductase of Saccharolobus solfataricus (strain ATCC 35092 / DSM 1617 / JCM 11322 / P2) (Sulfolobus solfataricus).